Here is a 456-residue protein sequence, read N- to C-terminus: MQLSSLTAVSPVDGRYAGKTSSLRPIFSEYGLIRFRVMVEVRWLQRLAAHAGIPEVAPFSAEANALLDSLASDFQLEHAERIKEIERTTNHDVKAVEYLLKEQAAKLPELAAVSEFIHFACTSEDINNLSHALMLREGRDSVLLPLMRQIAEAIRELAVKLADVPMLSRTHGQPASPTTLGKELANVVYRLERQIKQVAGIELLGKINGAVGNYNAHLSAYPEVDWEANARQFIEGDLGLTFNPYTTQIEPHDYIAELFDAIARFNTILIDFDRDVWGYISLGYFKQKTVAGEIGSSTMPHKVNPIDFENSEGNLGIANALFQHLASKLPISRWQRDLTDSTVLRNLGVGIAHSIIAYEASLKGIGKLELNAQRIAEDLDACWEVLAEPVQTVMRRYGVENPYEKLKELTRGKGISAEALQTFIEELAIPAEAKVELKKLTPAGYVGNAAAQAKRI.

Residues 15 to 16 (RY), 90 to 92 (NHD), and 122 to 123 (TS) contribute to the N(6)-(1,2-dicarboxyethyl)-AMP site. The active-site Proton donor/acceptor is the His-171. Residue Gln-248 coordinates N(6)-(1,2-dicarboxyethyl)-AMP. Catalysis depends on Ser-296, which acts as the Proton donor/acceptor. N(6)-(1,2-dicarboxyethyl)-AMP-binding positions include Ser-297, 302–304 (KVN), Asn-310, Arg-336, and 341–345 (STVLR).

It belongs to the lyase 1 family. Adenylosuccinate lyase subfamily. As to quaternary structure, homotetramer. Residues from neighboring subunits contribute catalytic and substrate-binding residues to each active site.

It carries out the reaction N(6)-(1,2-dicarboxyethyl)-AMP = fumarate + AMP. The enzyme catalyses (2S)-2-[5-amino-1-(5-phospho-beta-D-ribosyl)imidazole-4-carboxamido]succinate = 5-amino-1-(5-phospho-beta-D-ribosyl)imidazole-4-carboxamide + fumarate. It participates in purine metabolism; AMP biosynthesis via de novo pathway; AMP from IMP: step 2/2. The protein operates within purine metabolism; IMP biosynthesis via de novo pathway; 5-amino-1-(5-phospho-D-ribosyl)imidazole-4-carboxamide from 5-amino-1-(5-phospho-D-ribosyl)imidazole-4-carboxylate: step 2/2. Functionally, catalyzes two reactions in de novo purine nucleotide biosynthesis. Catalyzes the breakdown of 5-aminoimidazole- (N-succinylocarboxamide) ribotide (SAICAR or 2-[5-amino-1-(5-phospho-beta-D-ribosyl)imidazole-4-carboxamido]succinate) to 5-aminoimidazole-4-carboxamide ribotide (AICAR or 5-amino-1-(5-phospho-beta-D-ribosyl)imidazole-4-carboxamide) and fumarate, and of adenylosuccinate (ADS or N(6)-(1,2-dicarboxyethyl)-AMP) to adenosine monophosphate (AMP) and fumarate. The chain is Adenylosuccinate lyase (purB) from Pseudomonas aeruginosa (strain ATCC 15692 / DSM 22644 / CIP 104116 / JCM 14847 / LMG 12228 / 1C / PRS 101 / PAO1).